The chain runs to 72 residues: Translation initiation factor IF-1 (72 aa).

In terms of domain architecture, S1-like spans 1-72 (MAKEDCIEME…SKGRIIYRAR (72 aa)).

The protein belongs to the IF-1 family. Component of the 30S ribosomal translation pre-initiation complex which assembles on the 30S ribosome in the order IF-2 and IF-3, IF-1 and N-formylmethionyl-tRNA(fMet); mRNA recruitment can occur at any time during PIC assembly.

The protein resides in the cytoplasm. One of the essential components for the initiation of protein synthesis. Stabilizes the binding of IF-2 and IF-3 on the 30S subunit to which N-formylmethionyl-tRNA(fMet) subsequently binds. Helps modulate mRNA selection, yielding the 30S pre-initiation complex (PIC). Upon addition of the 50S ribosomal subunit IF-1, IF-2 and IF-3 are released leaving the mature 70S translation initiation complex. This is Translation initiation factor IF-1 from Pseudoalteromonas atlantica (strain T6c / ATCC BAA-1087).